A 2144-amino-acid polypeptide reads, in one-letter code: Polyketide synthase-like protein Preu9 (2144 aa).

The region spanning 1–250 is the Ketosynthase family 3 (KS3) domain; the sequence is MYALHLAVNA…GANAHCIIDH (250 aa). A disordered region spans residues 276–325; the sequence is QNGHLNEFAANGTTNAPSRDHRNGITDGRADGNTNGHPNANGDVGGNPIN. Over residues 293-305 the composition is skewed to basic and acidic residues; the sequence is SRDHRNGITDGRA. The malonyl-CoA:ACP transacylase (MAT) stretch occupies residues 435 to 738; the sequence is FVFTGQGAQW…KSPVEQILKS (304 aa). The segment at 827 to 965 is N-terminal hotdog fold; sequence HDLLGSKVVG…GCVKLIIKSS (139 aa). Residues 827-1137 are dehydratase (DH) domain; it reads HDLLGSKVVG…ERLRCVSYSR (311 aa). Residues 827–1141 enclose the PKS/mFAS DH domain; it reads HDLLGSKVVG…CVSYSRISSD (315 aa). The active-site Proton acceptor; for dehydratase activity is His859. Positions 979 to 1141 are C-terminal hotdog fold; the sequence is TLRPVDVRAW…CVSYSRISSD (163 aa). The active-site Proton donor; for dehydratase activity is Asp1050. The methyltransferase (MT) domain stretch occupies residues 1305–1494; sequence TGIYPQLHRI…GLDVVLDDFP (190 aa). The enoyl reductase (ER) domain stretch occupies residues 1731–2042; sequence GVPNSLCFAS…LANMIGKLVV (312 aa).

Its function is as follows. Polyketide synthase-like protein that lacks important domains such as carrier domain and does probably not function as a polyketide synthase. The polypeptide is Polyketide synthase-like protein Preu9 (Preussia isomera (Coprophilous fungus)).